We begin with the raw amino-acid sequence, 753 residues long: MTILNHTLGFPRVGLRRELKKAQESYWAGNSTREELLTVGRELRARHWDQQKQAGIDLLPVGDFAWYDHVLTTSLLLGNVPPRHQNKDGSVDIDTLFRIGRGRAPTGEPAAAAEMTKWFNTNYHYMVPEFVKGQQFKLTWTQLLEEVDEALALSHNVKPVLLGPVTYLWLGKVKGEQFDRLSLLNDILPVYQQVLAELAKRGIEWVQIDEPALVLELPQAWLDAYKPAYDALQGQVKLLLTTYFEGVTPNLDTITALPVQGLHVDLVHGKDNVVELHKRLPSDWLLSAGLINGRNVWRADLTEKYAQIKDIVGKRDLWVASSCSLLHSPIDLSVETRLDAEVKSWFAFALQKCHELALLRDALNSGDTAALAEWSAPIQARRHSTRVHNPAVEKRLAAITAQDSQRANVYEVRAEAQRARFKLPAWPTTTIGSFPQTTEIRTLRLDFKKGNLDANNYRTGIAEHIKQAIVEQERLGLDVLVHGEAERNDMVEYFGEHLDGFVFTQNGWVQSYGSRCVKPPIVIGDISRPAPITVEWAKYAQSLTDKPVKGMLTGPVTILCWSFPREDVSRETIAKQIALALRDEVADLEAAGIGIIQIDEPALREGLPLRRSDWDAYLQWGVEAFRINAAVAKDDTQIHTHMCYCEFNDIMDSIAALDADVITIETSRSDMELLESFEEFDYPNEIGPGVYDIHSPNVPSVEWIEALLKKAAKRIPAERLWVNPDCGLKTRGWPETRAALANMVQAAQNLRRG.

5-methyltetrahydropteroyltri-L-glutamate-binding positions include 17-20 and Lys117; that span reads RELK. Residues 431 to 433 and Glu484 each bind L-homocysteine; that span reads IGS. L-methionine is bound by residues 431 to 433 and Glu484; that span reads IGS. Residues 515–516 and Trp561 contribute to the 5-methyltetrahydropteroyltri-L-glutamate site; that span reads RC. Asp599 is a binding site for L-homocysteine. Asp599 is an L-methionine binding site. Glu605 provides a ligand contact to 5-methyltetrahydropteroyltri-L-glutamate. Residues His641, Cys643, and Glu665 each coordinate Zn(2+). The Proton donor role is filled by His694. Position 726 (Cys726) interacts with Zn(2+).

It belongs to the vitamin-B12 independent methionine synthase family. Zn(2+) serves as cofactor.

The catalysed reaction is 5-methyltetrahydropteroyltri-L-glutamate + L-homocysteine = tetrahydropteroyltri-L-glutamate + L-methionine. It participates in amino-acid biosynthesis; L-methionine biosynthesis via de novo pathway; L-methionine from L-homocysteine (MetE route): step 1/1. In terms of biological role, catalyzes the transfer of a methyl group from 5-methyltetrahydrofolate to homocysteine resulting in methionine formation. This Shigella flexneri protein is 5-methyltetrahydropteroyltriglutamate--homocysteine methyltransferase.